The following is an 89-amino-acid chain: SAP domain-containing new25 (89 aa).

Residues 44–78 form the SAP domain; it reads PSQWSKKQLIEYCKKNSLKTSGSHEELVIRVQNHL.

The protein is SAP domain-containing new25 (new25) of Schizosaccharomyces pombe (strain 972 / ATCC 24843) (Fission yeast).